We begin with the raw amino-acid sequence, 522 residues long: Cell polarity protein mod5 (522 aa).

Disordered regions lie at residues 1 to 83 (MSAL…PDGD), 119 to 158 (KRSASKSPKRSANGSTSEDISIEGSPSETAKGARSSFNSN), 170 to 192 (RRILEASQDSSRPGRYSYRTKSA), 251 to 285 (PLQPYSPPANETPASSSSSAKARPVSVPDMSSPVP), and 300 to 516 (YSPS…KLEK). Composition is skewed to polar residues over residues 27–46 (PNTTVGFQFDNRNVGTSAPS), 66–76 (LPSSKQDTGSS), and 131–146 (NGSTSEDISIEGSPSE). Residue Ser-43 is modified to Phosphoserine. Over residues 258 to 285 (PANETPASSSSSAKARPVSVPDMSSPVP) the composition is skewed to low complexity. The residue at position 303 (Ser-303) is a Phosphoserine. Residues 308-318 (KVAETDSESRK) show a composition bias toward basic and acidic residues. Positions 335-349 (GAQTQSTPNRISRSD) are enriched in polar residues. The residue at position 350 (Ser-350) is a Phosphoserine. Polar residues-rich tracts occupy residues 363 to 396 (NASTASSEAISQSMRSFQPQPNTGSPFPRFTSTN) and 404 to 431 (DIPQSDANDSTVNLNQPNYANLTPTPQV). Residues 439–452 (SRSSPLPSASVPAL) show a composition bias toward low complexity. 2 stretches are compositionally biased toward basic and acidic residues: residues 472–482 (HESEMPPHVTR) and 495–516 (PKEKPSEKSEKPPKKKGSKLEK).

As to quaternary structure, interacts with tea1 and tea3.

Its subcellular location is the cell membrane. Its function is as follows. With tea1, acts in a positive-feedback loop in the microtubule-mediated regulation of cell polarity. Involved in the anchoring of tea1 at the cortex as well as the correct localization of tea3. This Schizosaccharomyces pombe (strain 972 / ATCC 24843) (Fission yeast) protein is Cell polarity protein mod5 (mod5).